The sequence spans 323 residues: Fos-related antigen 2 (323 aa).

The segment covering 1–27 (MYQDYPGSFDTSSRGSSGSPGHPEPYS) has biased composition (low complexity). Residues 1–31 (MYQDYPGSFDTSSRGSSGSPGHPEPYSAGAA) are disordered. Residues 124-187 (EEKRRIRRER…EKLEFMLVAH (64 aa)) enclose the bZIP domain. The basic motif stretch occupies residues 126-128 (KRR). Residues 129 to 136 (IRRERNKL) form a leucine-zipper region. Disordered regions lie at residues 194 to 214 (SPEE…TGAS) and 288 to 323 (ESPL…LLAL). The span at 305–317 (SSSGDQSSDSLNS) shows a compositional bias: low complexity.

This sequence belongs to the bZIP family. Fos subfamily. In terms of assembly, heterodimer with JUN.

Its subcellular location is the nucleus. In Gallus gallus (Chicken), this protein is Fos-related antigen 2 (FOSL2).